Reading from the N-terminus, the 153-residue chain is Bursicon (153 aa).

The first 22 residues, 1 to 22 (MLLYHIVGASVLICLLNETAKA), serve as a signal peptide directing secretion. 5 disulfide bridges follow: Cys29–Cys78, Cys43–Cys92, Cys53–Cys113, Cys57–Cys115, and Cys75–Cys118. The CTCK domain maps to 29-119 (CQATPVIHFL…PLECMCRPCT (91 aa)).

In terms of assembly, heterodimer of burs and pburs.

Its subcellular location is the secreted. Functionally, final heterodimeric neurohormone released at the end of the molting cycle, involved in the sclerotization (tanning) of the insect cuticle, melanization and wing spreading. The chain is Bursicon from Apis mellifera (Honeybee).